Consider the following 267-residue polypeptide: Putative F-box protein At5g38810 (267 aa).

One can recognise an F-box domain in the interval 4–53 (RKTFDSIPDDLFVEIALRLSSKSIARCRCVSKLWASILYRQDFTELFITK).

The polypeptide is Putative F-box protein At5g38810 (Arabidopsis thaliana (Mouse-ear cress)).